We begin with the raw amino-acid sequence, 393 residues long: Bifunctional chrysanthemol synthase, chloroplastic (393 aa).

A compositionally biased stretch (low complexity) spans M1 to S18. Residues M1–P22 form a disordered region. The transit peptide at M1–S53 directs the protein to the chloroplast. 3 residues coordinate dimethylallyl diphosphate: K99, R102, and Q137. Residues D144 and D148 each coordinate Mg(2+). Residues R153, R154, K241, Q280, D287, K297, and K306 each coordinate dimethylallyl diphosphate.

This sequence belongs to the FPP/GGPP synthase family. It depends on Mg(2+) as a cofactor. Restricted to glandular trichomes during achene maturation. Expressed in flowers and in both ray and disk florets.

The protein localises to the plastid. It is found in the chloroplast. It carries out the reaction 2 dimethylallyl diphosphate = (R,R)-chrysanthemyl diphosphate + diphosphate. It catalyses the reaction (R,R)-chrysanthemyl diphosphate + H2O = (R,R)-chrysanthemol + diphosphate. The catalysed reaction is (R)-lavandulyl diphosphate + H2O = (R)-lavandulol + diphosphate. The protein operates within isoprenoid biosynthesis. Functionally, component of the monoterpenoid pyrethrins biosynthesis; pyrethrins are widely used plant-derived pesticide. Catalyzes the condensation of two molecules of dimethylallyl diphosphate to produce chrysanthemyl diphosphate (CPP), a monoterpene with a non-head-to-tail or irregular c1'-2-3 linkage between isoprenoid units. In a second step, hydrolyzes the diphosphate moiety of CPP to form chrysanthemol. With a lower efficiency, can also converts dimethylallyl diphosphate into lavandulyl diphosphate (LPP), and subsequently LPP into lavandulol. The chain is Bifunctional chrysanthemol synthase, chloroplastic from Tanacetum cinerariifolium (Dalmatian daisy).